Here is an 809-residue protein sequence, read N- to C-terminus: Sucrose synthase 3 (809 aa).

Residues Met277–Thr755 form a GT-B glycosyltransferase region.

It belongs to the glycosyltransferase 1 family. Plant sucrose synthase subfamily. Detected in the whole plant with highest expression in developing siliques, vasculature of cotyledons and stomatal guard cells. Also detected throughout the mature parts of the root but not in the expanding zone.

The enzyme catalyses an NDP-alpha-D-glucose + D-fructose = a ribonucleoside 5'-diphosphate + sucrose + H(+). Sucrose-cleaving enzyme that provides UDP-glucose and fructose for various metabolic pathways. Modulates metabolic homeostasis and direct carbon towards starch synthesis in developing seeds. This Arabidopsis thaliana (Mouse-ear cress) protein is Sucrose synthase 3 (SUS3).